Reading from the N-terminus, the 183-residue chain is dTDP-4-dehydrorhamnose 3,5-epimerase (183 aa).

Residues arginine 24, glutamate 29, 48–50 (QDN), and arginine 60 each bind substrate. The Proton acceptor role is filled by histidine 63. Residues lysine 73 and histidine 120 each coordinate substrate. The Proton donor role is filled by tyrosine 133. Residues glutamate 144 and lysine 169 each contribute to the substrate site.

The protein belongs to the dTDP-4-dehydrorhamnose 3,5-epimerase family. Homodimer.

The enzyme catalyses dTDP-4-dehydro-6-deoxy-alpha-D-glucose = dTDP-4-dehydro-beta-L-rhamnose. It participates in carbohydrate biosynthesis; dTDP-L-rhamnose biosynthesis. It functions in the pathway bacterial outer membrane biogenesis; LPS O-antigen biosynthesis. Catalyzes the epimerization of the C3' and C5'positions of dTDP-6-deoxy-D-xylo-4-hexulose, forming dTDP-6-deoxy-L-lyxo-4-hexulose. This is dTDP-4-dehydrorhamnose 3,5-epimerase from Salmonella typhimurium (strain LT2 / SGSC1412 / ATCC 700720).